Here is a 488-residue protein sequence, read N- to C-terminus: Putative BPI/LBP family protein At1g04970 (488 aa).

The first 24 residues, 1–24, serve as a signal peptide directing secretion; it reads MDVGRCFLFLLLPSFFFLPSQTQS. 5 N-linked (GlcNAc...) asparagine glycosylation sites follow: Asn79, Asn109, Asn231, Asn242, and Asn341.

This sequence belongs to the BPI/LBP/Plunc superfamily. BPI/LBP (TC 1.C.40) family.

The protein is Putative BPI/LBP family protein At1g04970 of Arabidopsis thaliana (Mouse-ear cress).